The following is a 434-amino-acid chain: Alpha-enolase (434 aa).

Ser-2 bears the N-acetylserine mark. N6-acetyllysine is present on Lys-5. Ser-27 carries the post-translational modification Phosphoserine. Positions 31–38 (FRAAVPSG) are epitope recognized by CAR and healthy patient antibodies. Position 40 (Ser-40) interacts with Mg(2+). Tyr-44 carries the phosphotyrosine modification. The interval 56 to 63 (RYMGKGVS) is epitope recognized by CAR antibodies. Residue Lys-60 is modified to N6-acetyllysine; alternate. Lys-60 is modified (N6-succinyllysine; alternate). Lys-64 and Lys-71 each carry N6-acetyllysine. Position 89 is an N6-acetyllysine; alternate (Lys-89). Lys-89 carries the N6-succinyllysine; alternate modification. Residues Lys-92 and Lys-126 each carry the N6-acetyllysine modification. A required for repression of c-myc promoter activity region spans residues 97-237 (MDGTENKSKF…KTAIGKAGYT (141 aa)). Substrate contacts are provided by His-158 and Glu-167. 2 positions are modified to N6-acetyllysine: Lys-193 and Lys-199. N6-acetyllysine; alternate is present on Lys-202. Lys-202 participates in a covalent cross-link: Glycyl lysine isopeptide (Lys-Gly) (interchain with G-Cter in SUMO2); alternate. Catalysis depends on Glu-210, which acts as the Proton donor. Residues Lys-228 and Lys-233 each carry the N6-acetyllysine; alternate modification. Position 228 is an N6-succinyllysine; alternate (Lys-228). Position 228 is an N6-(2-hydroxyisobutyryl)lysine; alternate (Lys-228). Lys-233 is modified (N6-malonyllysine; alternate). Asp-245 provides a ligand contact to Mg(2+). A Phosphoserine modification is found at Ser-254. An N6-acetyllysine modification is found at Lys-256. Residues Ser-263 and Ser-272 each carry the phosphoserine modification. N6-acetyllysine; alternate is present on Lys-281. Lys-281 carries the N6-(2-hydroxyisobutyryl)lysine; alternate modification. Lys-285 carries the N6-acetyllysine modification. Tyr-287 bears the Phosphotyrosine mark. Position 291 is a phosphoserine (Ser-291). Glu-293 and Asp-318 together coordinate Mg(2+). Glu-293 and Asp-318 together coordinate substrate. N6-acetyllysine occurs at positions 335 and 343. Lys-343 functions as the Proton acceptor in the catalytic mechanism. Residues 370–373 (SHRS) and Lys-394 contribute to the substrate site. A required for interaction with PLG region spans residues 405–434 (AKYNQLLRIEEELGSKAKFAGRNFRNPLAK). Lys-406 bears the N6-acetyllysine mark. Lys-420 is modified (N6-acetyllysine; alternate). Lys-420 carries the post-translational modification N6-succinyllysine; alternate. Lys-420 is modified (N6-malonyllysine; alternate).

The protein belongs to the enolase family. Mammalian enolase is composed of 3 isozyme subunits, alpha, beta and gamma, which can form homodimers or heterodimers which are cell-type and development-specific. ENO1 interacts with PLG in the neuronal plasma membrane and promotes its activation. The C-terminal lysine is required for this binding. Isoform MBP-1 interacts with TRAPPC2B. Interacts with ENO4 and PGAM2. Interacts with CMTM6. Mg(2+) is required as a cofactor. Post-translationally, ISGylated. In terms of processing, lysine 2-hydroxyisobutyrylation (Khib) by p300/EP300 activates the phosphopyruvate hydratase activity. As to expression, the alpha/alpha homodimer is expressed in embryo and in most adult tissues. The alpha/beta heterodimer and the beta/beta homodimer are found in striated muscle, and the alpha/gamma heterodimer and the gamma/gamma homodimer in neurons.

It localises to the cytoplasm. It is found in the cell membrane. Its subcellular location is the myofibril. The protein resides in the sarcomere. The protein localises to the m line. It localises to the nucleus. It carries out the reaction (2R)-2-phosphoglycerate = phosphoenolpyruvate + H2O. The protein operates within carbohydrate degradation; glycolysis; pyruvate from D-glyceraldehyde 3-phosphate: step 4/5. Functionally, glycolytic enzyme the catalyzes the conversion of 2-phosphoglycerate to phosphoenolpyruvate. In addition to glycolysis, involved in various processes such as growth control, hypoxia tolerance and allergic responses. May also function in the intravascular and pericellular fibrinolytic system due to its ability to serve as a receptor and activator of plasminogen on the cell surface of several cell-types such as leukocytes and neurons. Stimulates immunoglobulin production. In terms of biological role, binds to the myc promoter and acts as a transcriptional repressor. May be a tumor suppressor. In Homo sapiens (Human), this protein is Alpha-enolase (ENO1).